We begin with the raw amino-acid sequence, 41 residues long: Photosystem II reaction center protein Y (41 aa).

Met-1 carries the N-formylmethionine modification. Over 1–4 (MDWR) the chain is Lumenal. The chain crosses the membrane as a helical span at residues 5-23 (VLVVLLPVLLAAGWAVRNI). The Cytoplasmic portion of the chain corresponds to 24–41 (LPYAVKQVQKLLQKAKAA).

This sequence belongs to the PsbY family. In terms of assembly, PSII is composed of 1 copy each of membrane proteins PsbA, PsbB, PsbC, PsbD, PsbE, PsbF, PsbH, PsbI, PsbJ, PsbK, PsbL, PsbM, PsbT, PsbX, PsbY, PsbZ, Psb30/Ycf12, peripheral proteins PsbO, CyanoQ (PsbQ), PsbU, PsbV and a large number of cofactors. It forms dimeric complexes. This protein is only loosely associated with PSII, and is not often found in crystals. Found on the exterior of the PSII dimer, near cytochrome b559 (psbE and psbF). PSII binds multiple chlorophylls, carotenoids and specific lipids. is required as a cofactor.

The protein localises to the cellular thylakoid membrane. Its function is as follows. Loosely associated component of the core of photosystem II, it is not always seen in crystals. PSII is a light-driven water plastoquinone oxidoreductase, using light energy to abstract electrons from H(2)O, generating a proton gradient subsequently used for ATP formation. In Thermosynechococcus vestitus (strain NIES-2133 / IAM M-273 / BP-1), this protein is Photosystem II reaction center protein Y.